A 1561-amino-acid polypeptide reads, in one-letter code: Synemin (1561 aa).

A head region spans residues 1–10 (MLSWRLQTGS). The coil 1A stretch occupies residues 11–49 (EKAELQELNARLYDYVCRVRELERENLLLEEELRSRLSR). The tract at residues 11 to 320 (EKAELQELNA…YRALLEGESN (310 aa)) is interaction with DMD and UTRN. The IF rod domain occupies 11-322 (EKAELQELNA…ALLEGESNPE (312 aa)). The linker 1 stretch occupies residues 50–58 (EDRWAEDQA). The tract at residues 59 to 163 (LYAEEARSLR…DLRARAASLT (105 aa)) is coil 1B. The segment at 164–186 (MHFRARATSPAAPPPRLRDVHDS) is linker 12. The coil 2 stretch occupies residues 187 to 300 (YALLVAESWR…LRDYQELLQV (114 aa)). The segment at 301-1561 (KTGLSLEVAT…EEEEEGEGWF (1261 aa)) is tail. 2 stretches are compositionally biased toward polar residues: residues 371–390 (SSASYSNWPGHLDSQTTTAV) and 401–421 (SRHSSSATTSGQQKPLEKTIS). Disordered regions lie at residues 371-421 (SSAS…KTIS), 549-574 (DARKRESRHLRDEAREKEALKERSVK), and 591-637 (EVST…DSTT). Residues 601–624 (GRKDVSHSGGREAETKETRFRLDT) show a composition bias toward basic and acidic residues. Polar residues predominate over residues 625 to 637 (QDTASSLQSDSTT). T653 bears the Phosphothreonine mark. 9 positions are modified to phosphoserine: S655, S778, S780, S1044, S1049, S1077, S1087, S1179, and S1182. Disordered stretches follow at residues 1033–1061 (SVVRESLAKRSSPVPRSPDREDGEEVPAG) and 1075–1099 (SPSGERDDAGQVSPSSDQRVTQGPV). A compositionally biased stretch (polar residues) spans 1086–1099 (VSPSSDQRVTQGPV). The interval 1152–1453 (VSGDFSEAVS…GPKETSFTFQ (302 aa)) is interaction with TLN1 and VCL. Positions 1212–1231 (ADISGSGRMPGSERSHTEKE) are disordered. Over residues 1222–1231 (GSERSHTEKE) the composition is skewed to basic and acidic residues. The interval 1242-1557 (AQVGGNFATE…DNEEEEEEEG (316 aa)) is interaction with DMD and UTRN. Position 1425 is a phosphoserine (S1425). An Omega-N-methylarginine modification is found at R1481. Positions 1491-1519 (DERVASTGSGASPGDAHQAPGEKGTEQAG) are disordered.

Belongs to the intermediate filament family. As to quaternary structure, interacts with DES, DMD, DTNA, TLN1, UTRN and VCL. Isoform 1 and isoform 2 interact with GFAP and VIM. In terms of tissue distribution, isoform 2 and isoform 3 are detected in adult skeletal muscle, heart and bladder, whereas isoform 1 is only detected in adult bladder (at protein level).

Its subcellular location is the cytoplasm. The protein resides in the cytoskeleton. It localises to the cell junction. The protein localises to the adherens junction. Type-VI intermediate filament (IF) which plays an important cytoskeletal role within the muscle cell cytoskeleton. It forms heteromeric IFs with desmin and/or vimentin, and via its interaction with cytoskeletal proteins alpha-dystrobrevin, dystrophin, talin-1, utrophin and vinculin, is able to link these heteromeric IFs to adherens-type junctions, such as to the costameres, neuromuscular junctions, and myotendinous junctions within striated muscle cells. This Mus musculus (Mouse) protein is Synemin.